The sequence spans 525 residues: GMP synthase [glutamine-hydrolyzing] (525 aa).

The region spanning 9–207 (RILILDFGSQ…VLDICQCEAL (199 aa)) is the Glutamine amidotransferase type-1 domain. The Nucleophile role is filled by Cys-86. Active-site residues include His-181 and Glu-183. Residues 208–400 (WTPAKIIDDA…LGLPYNMLYR (193 aa)) enclose the GMPS ATP-PPase domain. 235–241 (SGGVDSS) serves as a coordination point for ATP.

As to quaternary structure, homodimer.

It catalyses the reaction XMP + L-glutamine + ATP + H2O = GMP + L-glutamate + AMP + diphosphate + 2 H(+). Its pathway is purine metabolism; GMP biosynthesis; GMP from XMP (L-Gln route): step 1/1. In terms of biological role, catalyzes the synthesis of GMP from XMP. This is GMP synthase [glutamine-hydrolyzing] from Pectobacterium atrosepticum (strain SCRI 1043 / ATCC BAA-672) (Erwinia carotovora subsp. atroseptica).